Reading from the N-terminus, the 319-residue chain is Biotin synthase (319 aa).

The 227-residue stretch at 41–267 folds into the Radical SAM core domain; the sequence is YKGNKVKVCS…TPDIMICGGR (227 aa). [4Fe-4S] cluster-binding residues include Cys-59, Cys-63, and Cys-66. Cys-192 is a binding site for [2Fe-2S] cluster.

It belongs to the radical SAM superfamily. Biotin synthase family. Homodimer. The cofactor is [4Fe-4S] cluster. [2Fe-2S] cluster serves as cofactor.

The enzyme catalyses (4R,5S)-dethiobiotin + (sulfur carrier)-SH + 2 reduced [2Fe-2S]-[ferredoxin] + 2 S-adenosyl-L-methionine = (sulfur carrier)-H + biotin + 2 5'-deoxyadenosine + 2 L-methionine + 2 oxidized [2Fe-2S]-[ferredoxin]. The protein operates within cofactor biosynthesis; biotin biosynthesis; biotin from 7,8-diaminononanoate: step 2/2. Catalyzes the conversion of dethiobiotin (DTB) to biotin by the insertion of a sulfur atom into dethiobiotin via a radical-based mechanism. This Endomicrobium trichonymphae protein is Biotin synthase.